A 477-amino-acid polypeptide reads, in one-letter code: Glycogen synthase (477 aa).

K15 is a binding site for ADP-alpha-D-glucose.

This sequence belongs to the glycosyltransferase 1 family. Bacterial/plant glycogen synthase subfamily.

It carries out the reaction [(1-&gt;4)-alpha-D-glucosyl](n) + ADP-alpha-D-glucose = [(1-&gt;4)-alpha-D-glucosyl](n+1) + ADP + H(+). Its pathway is glycan biosynthesis; glycogen biosynthesis. Functionally, synthesizes alpha-1,4-glucan chains using ADP-glucose. This is Glycogen synthase from Streptococcus pneumoniae serotype 19F (strain G54).